The primary structure comprises 242 residues: Ribosomal RNA small subunit methyltransferase G (242 aa).

S-adenosyl-L-methionine is bound by residues Gly-81, Phe-86, 104-106 (DST), 132-133 (AE), and Arg-151.

It belongs to the methyltransferase superfamily. RNA methyltransferase RsmG family.

It is found in the cytoplasm. Functionally, specifically methylates the N7 position of a guanine in 16S rRNA. The protein is Ribosomal RNA small subunit methyltransferase G of Synechococcus elongatus (strain ATCC 33912 / PCC 7942 / FACHB-805) (Anacystis nidulans R2).